The primary structure comprises 55 residues: Large ribosomal subunit protein bL33 (55 aa).

This sequence belongs to the bacterial ribosomal protein bL33 family.

This Blochmanniella pennsylvanica (strain BPEN) protein is Large ribosomal subunit protein bL33.